Here is a 364-residue protein sequence, read N- to C-terminus: tRNA 2-selenouridine synthase (364 aa).

The Rhodanese domain maps to 14–137 (LIADTPIIDV…LRQTAIQATI (124 aa)). C97 acts as the S-selanylcysteine intermediate in catalysis.

The protein belongs to the SelU family. As to quaternary structure, monomer.

It catalyses the reaction 5-methylaminomethyl-2-thiouridine(34) in tRNA + selenophosphate + (2E)-geranyl diphosphate + H2O + H(+) = 5-methylaminomethyl-2-selenouridine(34) in tRNA + (2E)-thiogeraniol + phosphate + diphosphate. The catalysed reaction is 5-methylaminomethyl-2-thiouridine(34) in tRNA + (2E)-geranyl diphosphate = 5-methylaminomethyl-S-(2E)-geranyl-thiouridine(34) in tRNA + diphosphate. It carries out the reaction 5-methylaminomethyl-S-(2E)-geranyl-thiouridine(34) in tRNA + selenophosphate + H(+) = 5-methylaminomethyl-2-(Se-phospho)selenouridine(34) in tRNA + (2E)-thiogeraniol. The enzyme catalyses 5-methylaminomethyl-2-(Se-phospho)selenouridine(34) in tRNA + H2O = 5-methylaminomethyl-2-selenouridine(34) in tRNA + phosphate. Its function is as follows. Involved in the post-transcriptional modification of the uridine at the wobble position (U34) of tRNA(Lys), tRNA(Glu) and tRNA(Gln). Catalyzes the conversion of 2-thiouridine (S2U-RNA) to 2-selenouridine (Se2U-RNA). Acts in a two-step process involving geranylation of 2-thiouridine (S2U) to S-geranyl-2-thiouridine (geS2U) and subsequent selenation of the latter derivative to 2-selenouridine (Se2U) in the tRNA chain. The chain is tRNA 2-selenouridine synthase from Escherichia fergusonii (strain ATCC 35469 / DSM 13698 / CCUG 18766 / IAM 14443 / JCM 21226 / LMG 7866 / NBRC 102419 / NCTC 12128 / CDC 0568-73).